Here is a 239-residue protein sequence, read N- to C-terminus: Cysteine-rich venom protein (239 aa).

An N-terminal signal peptide occupies residues 1–19; the sequence is MIAFLVLPILAAVLQQSSG. In terms of domain architecture, SCP spans 39–166; that stretch reads DLHNSLRRSV…EYKYFYVCQY (128 aa). 8 disulfides stabilise this stretch: Cys-75-Cys-153, Cys-92-Cys-167, Cys-148-Cys-164, Cys-186-Cys-193, Cys-189-Cys-198, Cys-202-Cys-234, Cys-211-Cys-228, and Cys-219-Cys-232. The 33-residue stretch at 202–234 folds into the ShKT domain; it reads CTHEDKFTNCKDLVKQGCNNNYLKTNCPASCSC.

The protein belongs to the CRISP family. Expressed by the venom gland.

Its subcellular location is the secreted. Blocks contraction of smooth muscle elicited by high potassium-induced depolarization, but does not block caffeine-stimulated contraction. May target voltage-gated calcium channels in smooth muscle. The polypeptide is Cysteine-rich venom protein (Vipera berus (Common European adder)).